Consider the following 122-residue polypeptide: Large ribosomal subunit protein bL12 (122 aa).

Belongs to the bacterial ribosomal protein bL12 family. Homodimer. Part of the ribosomal stalk of the 50S ribosomal subunit. Forms a multimeric L10(L12)X complex, where L10 forms an elongated spine to which 2 to 4 L12 dimers bind in a sequential fashion. Binds GTP-bound translation factors.

Forms part of the ribosomal stalk which helps the ribosome interact with GTP-bound translation factors. Is thus essential for accurate translation. This is Large ribosomal subunit protein bL12 from Clostridium botulinum (strain Langeland / NCTC 10281 / Type F).